We begin with the raw amino-acid sequence, 541 residues long: Arginine--tRNA ligase (541 aa).

A 'HIGH' region motif is present at residues 119–129 (ANPTGPLHIGH).

Belongs to the class-I aminoacyl-tRNA synthetase family. In terms of assembly, monomer.

It localises to the cytoplasm. It carries out the reaction tRNA(Arg) + L-arginine + ATP = L-arginyl-tRNA(Arg) + AMP + diphosphate. This Helicobacter pylori (strain ATCC 700392 / 26695) (Campylobacter pylori) protein is Arginine--tRNA ligase (argS).